The sequence spans 1181 residues: Putative primase (1181 aa).

The interval 1141–1181 is disordered; sequence RSHSTMVEHDMDDDESTNKKQELEEEDEECIDIDEYNNERF. The segment covering 1163-1181 has biased composition (acidic residues); it reads LEEEDEECIDIDEYNNERF.

This sequence belongs to the eukaryotic-type primase small subunit family.

Synthesizes small RNA primers for the Okazaki fragments on both template strands at replication forks during viral DNA synthesis. The polypeptide is Putative primase (Magallana gigas (Pacific oyster)).